Here is a 206-residue protein sequence, read N- to C-terminus: Protein Mabiki (206 aa).

The segment at 54–77 (FSDQDADFPPLPKRRRLGSSSSSV) is disordered.

Its function is as follows. Plays a role in inducing apoptosis and is involved in the repair of head patterning defects in the embryo caused by extra maternal copies of the homeotic gene bicoid. The polypeptide is Protein Mabiki (Drosophila melanogaster (Fruit fly)).